A 204-amino-acid polypeptide reads, in one-letter code: 3-isopropylmalate dehydratase small subunit (204 aa).

Belongs to the LeuD family. LeuD type 1 subfamily. Heterodimer of LeuC and LeuD.

It catalyses the reaction (2R,3S)-3-isopropylmalate = (2S)-2-isopropylmalate. It functions in the pathway amino-acid biosynthesis; L-leucine biosynthesis; L-leucine from 3-methyl-2-oxobutanoate: step 2/4. Functionally, catalyzes the isomerization between 2-isopropylmalate and 3-isopropylmalate, via the formation of 2-isopropylmaleate. This is 3-isopropylmalate dehydratase small subunit from Roseiflexus castenholzii (strain DSM 13941 / HLO8).